We begin with the raw amino-acid sequence, 265 residues long: Proteasome subunit alpha (265 aa).

Residues E236 to D265 form a disordered region.

This sequence belongs to the peptidase T1A family. In terms of assembly, the 20S proteasome core is composed of 14 alpha and 14 beta subunits that assemble into four stacked heptameric rings, resulting in a barrel-shaped structure. The two inner rings, each composed of seven catalytic beta subunits, are sandwiched by two outer rings, each composed of seven alpha subunits. The catalytic chamber with the active sites is on the inside of the barrel. Has a gated structure, the ends of the cylinder being occluded by the N-termini of the alpha-subunits. Is capped by the proteasome-associated ATPase, ARC.

The protein resides in the cytoplasm. The protein operates within protein degradation; proteasomal Pup-dependent pathway. Its activity is regulated as follows. The formation of the proteasomal ATPase ARC-20S proteasome complex, likely via the docking of the C-termini of ARC into the intersubunit pockets in the alpha-rings, may trigger opening of the gate for substrate entry. Interconversion between the open-gate and close-gate conformations leads to a dynamic regulation of the 20S proteasome proteolysis activity. Component of the proteasome core, a large protease complex with broad specificity involved in protein degradation. This chain is Proteasome subunit alpha, found in Mycobacterium leprae (strain Br4923).